The following is a 313-amino-acid chain: D-alanine--D-alanine ligase (313 aa).

The ATP-grasp domain maps to 108–308 (KLVWQQTGVP…YSELVVKVLS (201 aa)). Residue 138 to 193 (VAKLGLPLFVKPASEGSSVAVLKVKTADALPAALAEAATHDKIVIVEKSIEGGGEY) coordinates ATP. Residues aspartate 262, glutamate 275, and asparagine 277 each coordinate Mg(2+).

The protein belongs to the D-alanine--D-alanine ligase family. The cofactor is Mg(2+). It depends on Mn(2+) as a cofactor.

It is found in the cytoplasm. The catalysed reaction is 2 D-alanine + ATP = D-alanyl-D-alanine + ADP + phosphate + H(+). It participates in cell wall biogenesis; peptidoglycan biosynthesis. In terms of biological role, cell wall formation. This chain is D-alanine--D-alanine ligase, found in Burkholderia cenocepacia (strain HI2424).